The sequence spans 480 residues: Aspartyl/glutamyl-tRNA(Asn/Gln) amidotransferase subunit B (480 aa).

The protein belongs to the GatB/GatE family. GatB subfamily. As to quaternary structure, heterotrimer of A, B and C subunits.

It catalyses the reaction L-glutamyl-tRNA(Gln) + L-glutamine + ATP + H2O = L-glutaminyl-tRNA(Gln) + L-glutamate + ADP + phosphate + H(+). It carries out the reaction L-aspartyl-tRNA(Asn) + L-glutamine + ATP + H2O = L-asparaginyl-tRNA(Asn) + L-glutamate + ADP + phosphate + 2 H(+). In terms of biological role, allows the formation of correctly charged Asn-tRNA(Asn) or Gln-tRNA(Gln) through the transamidation of misacylated Asp-tRNA(Asn) or Glu-tRNA(Gln) in organisms which lack either or both of asparaginyl-tRNA or glutaminyl-tRNA synthetases. The reaction takes place in the presence of glutamine and ATP through an activated phospho-Asp-tRNA(Asn) or phospho-Glu-tRNA(Gln). The protein is Aspartyl/glutamyl-tRNA(Asn/Gln) amidotransferase subunit B of Streptococcus pneumoniae serotype 19F (strain G54).